We begin with the raw amino-acid sequence, 138 residues long: Acidic phospholipase A2 5 (138 aa).

An N-terminal signal peptide occupies residues 1–16 (MRTLWIVAVWLIGVEG). Cystine bridges form between C42/C131, C44/C60, C59/C111, C65/C138, C66/C104, C73/C97, and C91/C102. Ca(2+)-binding residues include Y43, G45, and G47. The active site involves H63. D64 is a Ca(2+) binding site. D105 is an active-site residue.

Belongs to the phospholipase A2 family. Group II subfamily. D49 sub-subfamily. The cofactor is Ca(2+). As to expression, expressed by the venom gland.

The protein localises to the secreted. The enzyme catalyses a 1,2-diacyl-sn-glycero-3-phosphocholine + H2O = a 1-acyl-sn-glycero-3-phosphocholine + a fatty acid + H(+). Its function is as follows. PLA2 catalyzes the calcium-dependent hydrolysis of the 2-acyl groups in 3-sn-phosphoglycerides. The protein is Acidic phospholipase A2 5 of Echis ocellatus (Ocellated saw-scaled viper).